The sequence spans 676 residues: Zinc finger CCCH domain-containing protein 38 (676 aa).

Disordered stretches follow at residues 1-134 (MEMS…DHLF), 172-217 (SSDY…RSSN), 245-307 (RKQP…SWID), 487-506 (SVQP…NPNQ), and 533-594 (IQEV…DPKG). Residues 12–21 (SKWDSKEDTH) are compositionally biased toward basic and acidic residues. Residues 58-79 (RVSQNNDNSYFSEQDGTRQQFV) are compositionally biased toward polar residues. 3 stretches are compositionally biased toward basic and acidic residues: residues 101–110 (ARRDAGSYDR), 124–134 (EFNKRGSDHLF), and 192–212 (SEFT…EGGF). The C3H1-type zinc-finger motif lies at 214–243 (RSSNIPCKFFAAGTGFCRNGKYCRFSHHVA). Residues 251 to 262 (NNNNFYRQDNNN) are compositionally biased toward low complexity. Residues 269–278 (KWNDVERLDN) show a composition bias toward basic and acidic residues. Positions 538 to 562 (LDPKENGDKKTDEASKEEEGKKTGE) are enriched in basic and acidic residues. Acidic residues predominate over residues 563–583 (DTNDAENVVDEDEDGDDDGSD). A compositionally biased stretch (basic and acidic residues) spans 584–594 (EENKKEKDPKG).

This is Zinc finger CCCH domain-containing protein 38 from Arabidopsis thaliana (Mouse-ear cress).